Consider the following 962-residue polypeptide: Glycine dehydrogenase (decarboxylating) (962 aa).

Residue K709 is modified to N6-(pyridoxal phosphate)lysine.

Belongs to the GcvP family. The glycine cleavage system is composed of four proteins: P, T, L and H. Pyridoxal 5'-phosphate is required as a cofactor.

The catalysed reaction is N(6)-[(R)-lipoyl]-L-lysyl-[glycine-cleavage complex H protein] + glycine + H(+) = N(6)-[(R)-S(8)-aminomethyldihydrolipoyl]-L-lysyl-[glycine-cleavage complex H protein] + CO2. Functionally, the glycine cleavage system catalyzes the degradation of glycine. The P protein binds the alpha-amino group of glycine through its pyridoxal phosphate cofactor; CO(2) is released and the remaining methylamine moiety is then transferred to the lipoamide cofactor of the H protein. The sequence is that of Glycine dehydrogenase (decarboxylating) from Shewanella loihica (strain ATCC BAA-1088 / PV-4).